We begin with the raw amino-acid sequence, 76 residues long: Kappa-actitoxin-Avd4d (76 aa).

The signal sequence occupies residues 1–19 (MNKALFLCLVVLCAAVVFA). The propeptide occupies 20–31 (AEDLQKAKHVPF). Intrachain disulfides connect cysteine 37–cysteine 72, cysteine 39–cysteine 65, and cysteine 55–cysteine 73.

It belongs to the sea anemone type 3 (BDS) potassium channel toxin family. As to expression, moderately expressed in the ectodermal tissue from the distal and proximal tentacles, body wall, and oral disk.

It is found in the secreted. It localises to the nematocyst. Functionally, blocks Kv3 voltage-gated potassium channels. Reduces blood pressure. In Anemonia viridis (Snakelocks anemone), this protein is Kappa-actitoxin-Avd4d.